The chain runs to 185 residues: Threonylcarbamoyl-AMP synthase (185 aa).

The YrdC-like domain maps to 1 to 185 (MDNFEQVLNA…AKTSQILRQG (185 aa)). A disordered region spans residues 163–185 (ETSGRDKPSEIRDAKTSQILRQG). Residues 164–177 (TSGRDKPSEIRDAK) show a composition bias toward basic and acidic residues.

This sequence belongs to the SUA5 family. TsaC subfamily.

Its subcellular location is the cytoplasm. It catalyses the reaction L-threonine + hydrogencarbonate + ATP = L-threonylcarbamoyladenylate + diphosphate + H2O. Its function is as follows. Required for the formation of a threonylcarbamoyl group on adenosine at position 37 (t(6)A37) in tRNAs that read codons beginning with adenine. Catalyzes the conversion of L-threonine, HCO(3)(-)/CO(2) and ATP to give threonylcarbamoyl-AMP (TC-AMP) as the acyladenylate intermediate, with the release of diphosphate. The polypeptide is Threonylcarbamoyl-AMP synthase (Vibrio parahaemolyticus serotype O3:K6 (strain RIMD 2210633)).